The chain runs to 423 residues: Histidine--tRNA ligase (423 aa).

Belongs to the class-II aminoacyl-tRNA synthetase family. As to quaternary structure, homodimer.

The protein resides in the cytoplasm. The catalysed reaction is tRNA(His) + L-histidine + ATP = L-histidyl-tRNA(His) + AMP + diphosphate + H(+). The chain is Histidine--tRNA ligase from Rhodococcus opacus (strain B4).